Reading from the N-terminus, the 663-residue chain is UvrABC system protein B (663 aa).

A Helicase ATP-binding domain is found at 31 to 418 (DNIEGGEKAQ…TDTVVEQIIR (388 aa)). 44 to 51 (GATGTGKT) is an ATP binding site. The Beta-hairpin signature appears at 97-120 (YYDYYQPEAYVPSSDTYIEKDSSV). In terms of domain architecture, Helicase C-terminal spans 435–601 (QMDDLLGEIN…TIKKEIRDLI (167 aa)). The UVR domain maps to 627–662 (QAEIKALQQQMQEAAELLDFELAAQIRDVILELKAI).

Belongs to the UvrB family. In terms of assembly, forms a heterotetramer with UvrA during the search for lesions. Interacts with UvrC in an incision complex.

The protein localises to the cytoplasm. In terms of biological role, the UvrABC repair system catalyzes the recognition and processing of DNA lesions. A damage recognition complex composed of 2 UvrA and 2 UvrB subunits scans DNA for abnormalities. Upon binding of the UvrA(2)B(2) complex to a putative damaged site, the DNA wraps around one UvrB monomer. DNA wrap is dependent on ATP binding by UvrB and probably causes local melting of the DNA helix, facilitating insertion of UvrB beta-hairpin between the DNA strands. Then UvrB probes one DNA strand for the presence of a lesion. If a lesion is found the UvrA subunits dissociate and the UvrB-DNA preincision complex is formed. This complex is subsequently bound by UvrC and the second UvrB is released. If no lesion is found, the DNA wraps around the other UvrB subunit that will check the other stand for damage. In Streptococcus agalactiae serotype III (strain NEM316), this protein is UvrABC system protein B.